The sequence spans 331 residues: Serpentine receptor class alpha-1 (331 aa).

7 consecutive transmembrane segments (helical) span residues 22–42 (FAVF…VIAV), 57–77 (IILV…AIIS), 104–124 (YTEV…GILI), 143–163 (VGII…QIII), 189–209 (FLFI…AVMF), 238–258 (ICVV…GVLI), and 274–294 (LITW…ILIF).

Belongs to the nematode receptor-like protein sra family.

The protein localises to the membrane. The polypeptide is Serpentine receptor class alpha-1 (sra-1) (Caenorhabditis elegans).